The sequence spans 389 residues: Glutamate 5-kinase (389 aa).

Lysine 17 contributes to the ATP binding site. Substrate-binding residues include serine 57, aspartate 144, and asparagine 156. An ATP-binding site is contributed by 176–177 (SD). The PUA domain maps to 282–359 (AGEIHVDAGA…NEIETILGYV (78 aa)).

Belongs to the glutamate 5-kinase family.

The protein localises to the cytoplasm. The enzyme catalyses L-glutamate + ATP = L-glutamyl 5-phosphate + ADP. Its pathway is amino-acid biosynthesis; L-proline biosynthesis; L-glutamate 5-semialdehyde from L-glutamate: step 1/2. Catalyzes the transfer of a phosphate group to glutamate to form L-glutamate 5-phosphate. This Agrobacterium fabrum (strain C58 / ATCC 33970) (Agrobacterium tumefaciens (strain C58)) protein is Glutamate 5-kinase.